A 280-amino-acid chain; its full sequence is Eukaryotic translation initiation factor 3 subunit F-1 (280 aa).

The 131-residue stretch at 8–138 (VRVHPVVLFQ…LRAYVCIQLG (131 aa)) folds into the MPN domain.

Belongs to the eIF-3 subunit F family. Component of the eukaryotic translation initiation factor 3 (eIF-3) complex. The eIF-3 complex interacts with pix.

The protein localises to the cytoplasm. In terms of biological role, component of the eukaryotic translation initiation factor 3 (eIF-3) complex, which is involved in protein synthesis of a specialized repertoire of mRNAs and, together with other initiation factors, stimulates binding of mRNA and methionyl-tRNAi to the 40S ribosome. The eIF-3 complex specifically targets and initiates translation of a subset of mRNAs involved in cell proliferation. This chain is Eukaryotic translation initiation factor 3 subunit F-1, found in Drosophila ananassae (Fruit fly).